The following is a 200-amino-acid chain: Recombination protein RecR (200 aa).

A C4-type zinc finger spans residues 57–72; that stretch reads CRQCRTLTEQELCPQC. A Toprim domain is found at 80-175; that stretch reads TQLCVVEGPT…VASRIAHGVP (96 aa).

It belongs to the RecR family.

May play a role in DNA repair. It seems to be involved in an RecBC-independent recombinational process of DNA repair. It may act with RecF and RecO. The polypeptide is Recombination protein RecR (Pseudomonas putida (strain ATCC 700007 / DSM 6899 / JCM 31910 / BCRC 17059 / LMG 24140 / F1)).